The primary structure comprises 1026 residues: Phosphoenolpyruvate carboxylase (1026 aa).

Active-site residues include H199 and K672.

Belongs to the PEPCase type 1 family. Mg(2+) is required as a cofactor.

It carries out the reaction oxaloacetate + phosphate = phosphoenolpyruvate + hydrogencarbonate. Functionally, forms oxaloacetate, a four-carbon dicarboxylic acid source for the tricarboxylic acid cycle. The protein is Phosphoenolpyruvate carboxylase (ppc) of Nostoc sp. (strain PCC 7120 / SAG 25.82 / UTEX 2576).